Consider the following 480-residue polypeptide: MLGRFQPFSLVRSFRLGFEACCYPNQKCATQTIRPPDSRCLVQAVSQNFNFAKDVLDQWSQLEKDGLRGPYPALWKVSAKGEEDKWSFERMTQLSKKAASILSDTCALSHGDRLMIILPPTPEAYWICLACVRLGITFVPGSPQLTAKKIRYQLRMSKAQCIVANEAMAPVVNSAVSDCPTLKTKLLVSDKSYDGWLDFKKLIQVAPPKQTYMRTKSQDPMAIFFTKGTTGAPKMVEYSQYGLGMGFSQASRRWMDLQPTDVLWSLGDAFGGSLSLSAVLGTWFQGACVFLCHMPTFCPETVLNVLSRFPITTLSANPEMYQELLQHKCFTSYRFKSLKQCVAAGGPISPGVIEDWKRITKLDIYEGYGQTETGLLCATSKTIKLKPSSLGKPLPPYIVQIVDENSNLLPPGEEGNIAIRIKLNQPASLYCPHMVSWEEYASARGHMLYLTGDRGIMDEDGYFWWSGRVDDVANALGQRL.

The transit peptide at 1–21 (MLGRFQPFSLVRSFRLGFEAC) directs the protein to the mitochondrion. Residues 226-234 (TKGTTGAPK), 366-371 (EGYGQT), Asp453, and Arg468 contribute to the ATP site.

The protein belongs to the ATP-dependent AMP-binding enzyme family. Monomer. Mg(2+) is required as a cofactor. Mn(2+) serves as cofactor.

The protein resides in the mitochondrion. It carries out the reaction a medium-chain fatty acid + ATP + CoA = a medium-chain fatty acyl-CoA + AMP + diphosphate. Its function is as follows. Catalyzes the activation of fatty acids by CoA to produce an acyl-CoA, the first step in fatty acid metabolism. The sequence is that of Acyl-coenzyme A synthetase ACSM6, mitochondrial (ACSM6) from Homo sapiens (Human).